The following is a 444-amino-acid chain: N-succinylarginine dihydrolase (444 aa).

Substrate-binding positions include 19-28 (AGLSFGNVAS), N110, and 137-138 (HR). E174 is an active-site residue. R214 lines the substrate pocket. H250 is an active-site residue. 2 residues coordinate substrate: D252 and N362. C368 acts as the Nucleophile in catalysis.

The protein belongs to the succinylarginine dihydrolase family. In terms of assembly, homodimer.

The catalysed reaction is N(2)-succinyl-L-arginine + 2 H2O + 2 H(+) = N(2)-succinyl-L-ornithine + 2 NH4(+) + CO2. It functions in the pathway amino-acid degradation; L-arginine degradation via AST pathway; L-glutamate and succinate from L-arginine: step 2/5. Functionally, catalyzes the hydrolysis of N(2)-succinylarginine into N(2)-succinylornithine, ammonia and CO(2). The protein is N-succinylarginine dihydrolase of Shewanella sp. (strain ANA-3).